The primary structure comprises 160 residues: Protein Bel-3 (160 aa).

As to quaternary structure, homodimer.

The protein localises to the host cytoplasm. The sequence is that of Protein Bel-3 (bel3) from Human spumaretrovirus (SFVcpz(hu)).